A 225-amino-acid polypeptide reads, in one-letter code: Probable septum site-determining protein MinC (225 aa).

It belongs to the MinC family. As to quaternary structure, interacts with MinD and FtsZ.

Cell division inhibitor that blocks the formation of polar Z ring septums. Rapidly oscillates between the poles of the cell to destabilize FtsZ filaments that have formed before they mature into polar Z rings. Prevents FtsZ polymerization. The protein is Probable septum site-determining protein MinC of Listeria welshimeri serovar 6b (strain ATCC 35897 / DSM 20650 / CCUG 15529 / CIP 8149 / NCTC 11857 / SLCC 5334 / V8).